The primary structure comprises 175 residues: MRIEVLRIGQRAVRDDRVTTHAALVARAFGAERIFMEEVNPQVRDTLADVSSTWGGGFEVELIDSWRALLRSKKGSASIVHLTMYGETIDAAIGSLRRKEKILAVVGAGKVPRDVYELADYNVSIGGQPHSEISALAVFLDRLQEGRQLSKGYGDARRKVLPMRRGKHVLEGEPE.

Leu82 contacts S-adenosyl-L-methionine.

It belongs to the aTrm56 family. Homodimer.

Its subcellular location is the cytoplasm. The enzyme catalyses cytidine(56) in tRNA + S-adenosyl-L-methionine = 2'-O-methylcytidine(56) in tRNA + S-adenosyl-L-homocysteine + H(+). In terms of biological role, specifically catalyzes the AdoMet-dependent 2'-O-ribose methylation of cytidine at position 56 in tRNAs. In Cenarchaeum symbiosum (strain A), this protein is tRNA (cytidine(56)-2'-O)-methyltransferase.